The primary structure comprises 65 residues: Protein translocase subunit SecE (65 aa).

A helical membrane pass occupies residues 44 to 64; sequence LVMAVVGLIAYIVQLTTSLII.

Belongs to the SecE/SEC61-gamma family. As to quaternary structure, component of the Sec protein translocase complex. Heterotrimer consisting of SecY (alpha), SecG (beta) and SecE (gamma) subunits. The heterotrimers can form oligomers, although 1 heterotrimer is thought to be able to translocate proteins. Interacts with the ribosome. May interact with SecDF, and other proteins may be involved.

The protein localises to the cell membrane. Its function is as follows. Essential subunit of the Sec protein translocation channel SecYEG. Clamps together the 2 halves of SecY. May contact the channel plug during translocation. The sequence is that of Protein translocase subunit SecE from Sulfolobus acidocaldarius (strain ATCC 33909 / DSM 639 / JCM 8929 / NBRC 15157 / NCIMB 11770).